A 180-amino-acid polypeptide reads, in one-letter code: Signaling threshold-regulating transmembrane adapter 1 (180 aa).

The Extracellular portion of the chain corresponds to 1–24 (MSRDYNCTTDDQLAWGIPSISHAW). N-linked (GlcNAc...) asparagine glycosylation occurs at N6. Residues 25-45 (GLWALLGVVTVLLLISLAALL) form a helical; Signal-anchor for type III membrane protein membrane-spanning segment. Topologically, residues 46 to 180 (SQWTRGRRRN…AYANSQPAPS (135 aa)) are cytoplasmic. S63 and S66 each carry phosphoserine. Y73 carries the post-translational modification Phosphotyrosine. The tract at residues 73-76 (YGNL) is interaction with GRB2. The segment at 81–103 (TGRLSQEPRSEEQDPPSSGGLAR) is disordered. S85 and S90 each carry phosphoserine. Phosphotyrosine occurs at positions 111, 132, and 153. Residues 130–135 (IKYCEV) form an interaction with PTPN11 region. The tract at residues 153–156 (YASV) is interaction with CSK. A Phosphoserine modification is found at S166. At Y172 the chain carries Phosphotyrosine. Residues 172–175 (YANS) are interaction with GRB2.

As to quaternary structure, homodimer; disulfide-linked. When phosphorylated, interacts with PTPN11/SHP2, GRB2 and CSK. Phosphorylated on tyrosines upon TCR activation; which leads to the recruitment of PTPN11, GRB2 and CSK. In terms of tissue distribution, expressed in thymus and spleen, with highest levels in immature thymocytes (at protein level).

It is found in the cell membrane. Negatively regulates T-cell antigen receptor (TCR)-mediated signaling. Involved in positive selection of T-cells. This Mus musculus (Mouse) protein is Signaling threshold-regulating transmembrane adapter 1 (Sit1).